The chain runs to 336 residues: Phosphate acyltransferase (336 aa).

It belongs to the PlsX family. As to quaternary structure, homodimer. Probably interacts with PlsY.

The protein resides in the cytoplasm. It carries out the reaction a fatty acyl-[ACP] + phosphate = an acyl phosphate + holo-[ACP]. Its pathway is lipid metabolism; phospholipid metabolism. In terms of biological role, catalyzes the reversible formation of acyl-phosphate (acyl-PO(4)) from acyl-[acyl-carrier-protein] (acyl-ACP). This enzyme utilizes acyl-ACP as fatty acyl donor, but not acyl-CoA. The polypeptide is Phosphate acyltransferase (Pseudomonas putida (strain ATCC 47054 / DSM 6125 / CFBP 8728 / NCIMB 11950 / KT2440)).